The primary structure comprises 602 residues: Glutamine--fructose-6-phosphate aminotransferase [isomerizing] (602 aa).

The Nucleophile; for GATase activity role is filled by C2. A Glutamine amidotransferase type-2 domain is found at 2 to 217 (CGIVGVVGNT…DQELVIVKAD (216 aa)). The segment at 67 to 87 (IGHTRWATHGKPTEDNAHPHR) is disordered. The span at 77–87 (KPTEDNAHPHR) shows a compositional bias: basic and acidic residues. SIS domains are found at residues 283 to 422 (IIKA…ANGN) and 455 to 592 (VREL…VDKP). K597 serves as the catalytic For Fru-6P isomerization activity.

Homodimer.

The protein resides in the cytoplasm. It catalyses the reaction D-fructose 6-phosphate + L-glutamine = D-glucosamine 6-phosphate + L-glutamate. Functionally, catalyzes the first step in hexosamine metabolism, converting fructose-6P into glucosamine-6P using glutamine as a nitrogen source. This Streptococcus pneumoniae (strain ATCC BAA-255 / R6) protein is Glutamine--fructose-6-phosphate aminotransferase [isomerizing].